Reading from the N-terminus, the 374-residue chain is MTARPSVSVYSASEDKVVGTCSLPAVFTAPIRHDVVQFVHTNMAKNSRQPYAVNRLSGMKHSTESWGTGRAVARIPRIHGGGTSMSGAGAFGNMCRGGRMFAPTKIFRRWHRKINLHQKRFAVVSALAASSLPALVMSRGHKIENVAEVPLVVEDGVRAYEKTKEAMTFLKTVGAIDDVNRVNDSRQIRAGRGKMRNRRYVARRGPMLVMPDNKGTRAFRNIFGLDLANVNSLNLLHLAPGGHVGRFIIWTKSAFEKLDKIFGTFTEPSTVKSGFMLPAPMLTSTDVTRIMQSEEVRRVLKPKKLQPKRPSRYRQPTNGIRNRRLRLRLNPFQKKEKAMAKGMQNKKNREARHAAKVVRLAKARKNVAKALKKK.

A disordered region spans residues 336–355; it reads EKAMAKGMQNKKNREARHAA.

Belongs to the universal ribosomal protein uL4 family.

The chain is Large ribosomal subunit protein uL4 (RPL4) from Trypanosoma brucei brucei.